The primary structure comprises 312 residues: Malate dehydrogenase 1 (312 aa).

NAD(+)-binding positions include 11–16 (GAGQIG) and Asp35. Residues Arg86 and Arg92 each contribute to the substrate site. NAD(+) is bound by residues Asn99 and 122-124 (ITN). Asn124 and Arg155 together coordinate substrate. The active-site Proton acceptor is the His179.

It belongs to the LDH/MDH superfamily. MDH type 3 family.

It carries out the reaction (S)-malate + NAD(+) = oxaloacetate + NADH + H(+). Catalyzes the reversible oxidation of malate to oxaloacetate. The chain is Malate dehydrogenase 1 from Anaeromyxobacter dehalogenans (strain 2CP-C).